We begin with the raw amino-acid sequence, 252 residues long: Ribosomal RNA small subunit methyltransferase J (252 aa).

Residues 101–102, 117–118, 153–154, and D171 each bind S-adenosyl-L-methionine; these read RD, ER, and SS.

The protein belongs to the methyltransferase superfamily. RsmJ family.

The protein localises to the cytoplasm. It catalyses the reaction guanosine(1516) in 16S rRNA + S-adenosyl-L-methionine = N(2)-methylguanosine(1516) in 16S rRNA + S-adenosyl-L-homocysteine + H(+). In terms of biological role, specifically methylates the guanosine in position 1516 of 16S rRNA. This chain is Ribosomal RNA small subunit methyltransferase J, found in Citrobacter koseri (strain ATCC BAA-895 / CDC 4225-83 / SGSC4696).